Consider the following 207-residue polypeptide: Octanoyltransferase (207 aa).

The 177-residue stretch at 27–203 (ADTEDELWVV…HLETQFTPKA (177 aa)) folds into the BPL/LPL catalytic domain. Substrate contacts are provided by residues 66-73 (RGGQITYH), 133-135 (SLG), and 146-148 (GLA). Cys164 functions as the Acyl-thioester intermediate in the catalytic mechanism.

This sequence belongs to the LipB family.

Its subcellular location is the cytoplasm. The catalysed reaction is octanoyl-[ACP] + L-lysyl-[protein] = N(6)-octanoyl-L-lysyl-[protein] + holo-[ACP] + H(+). It functions in the pathway protein modification; protein lipoylation via endogenous pathway; protein N(6)-(lipoyl)lysine from octanoyl-[acyl-carrier-protein]: step 1/2. Functionally, catalyzes the transfer of endogenously produced octanoic acid from octanoyl-acyl-carrier-protein onto the lipoyl domains of lipoate-dependent enzymes. Lipoyl-ACP can also act as a substrate although octanoyl-ACP is likely to be the physiological substrate. The chain is Octanoyltransferase from Neisseria meningitidis serogroup A / serotype 4A (strain DSM 15465 / Z2491).